We begin with the raw amino-acid sequence, 385 residues long: tRNA-specific 2-thiouridylase MnmA (385 aa).

ATP contacts are provided by residues 30–37 (GMSGGVDS) and Met-56. Residues 118-120 (NPD) are interaction with target base in tRNA. The active-site Nucleophile is Cys-123. An intrachain disulfide couples Cys-123 to Cys-220. Gly-148 lines the ATP pocket. The segment at 170-172 (KDQ) is interaction with tRNA. The active-site Cysteine persulfide intermediate is the Cys-220. The tract at residues 332-333 (RY) is interaction with tRNA.

It belongs to the MnmA/TRMU family.

Its subcellular location is the cytoplasm. It catalyses the reaction S-sulfanyl-L-cysteinyl-[protein] + uridine(34) in tRNA + AH2 + ATP = 2-thiouridine(34) in tRNA + L-cysteinyl-[protein] + A + AMP + diphosphate + H(+). Functionally, catalyzes the 2-thiolation of uridine at the wobble position (U34) of tRNA, leading to the formation of s(2)U34. This chain is tRNA-specific 2-thiouridylase MnmA, found in Haemophilus influenzae (strain PittGG).